A 313-amino-acid polypeptide reads, in one-letter code: Ornithine carbamoyltransferase (313 aa).

Carbamoyl phosphate-binding positions include 61-64 (STRT), Gln88, Arg112, and 139-142 (HPCQ). L-ornithine is bound by residues Asn170, Asp228, and 232 to 233 (SM). Carbamoyl phosphate contacts are provided by residues 268–269 (CL) and Arg296.

The protein belongs to the aspartate/ornithine carbamoyltransferase superfamily. OTCase family.

The protein resides in the cytoplasm. The catalysed reaction is carbamoyl phosphate + L-ornithine = L-citrulline + phosphate + H(+). Its pathway is amino-acid biosynthesis; L-arginine biosynthesis; L-arginine from L-ornithine and carbamoyl phosphate: step 1/3. Its function is as follows. Reversibly catalyzes the transfer of the carbamoyl group from carbamoyl phosphate (CP) to the N(epsilon) atom of ornithine (ORN) to produce L-citrulline. This chain is Ornithine carbamoyltransferase, found in Bordetella parapertussis (strain 12822 / ATCC BAA-587 / NCTC 13253).